We begin with the raw amino-acid sequence, 327 residues long: L-lactate dehydrogenase 1 (327 aa).

NAD(+)-binding positions include valine 21, aspartate 42, lysine 47, tyrosine 72, and 86 to 87; that span reads GA. Substrate-binding positions include glutamine 89, arginine 95, and 127 to 130; that span reads NPVD. Residues 125–127 and serine 150 contribute to the NAD(+) site; that span reads AAN. 155–158 is a binding site for substrate; the sequence is DSAR. Beta-D-fructose 1,6-bisphosphate-binding residues include arginine 160 and histidine 175. Catalysis depends on histidine 182, which acts as the Proton acceptor. Residue tyrosine 227 is modified to Phosphotyrosine. Threonine 236 contributes to the substrate binding site.

The protein belongs to the LDH/MDH superfamily. LDH family. Homotetramer.

Its subcellular location is the cytoplasm. It catalyses the reaction (S)-lactate + NAD(+) = pyruvate + NADH + H(+). Its pathway is fermentation; pyruvate fermentation to lactate; (S)-lactate from pyruvate: step 1/1. Its activity is regulated as follows. Allosterically activated by fructose 1,6-bisphosphate (FBP). Catalyzes the conversion of lactate to pyruvate. This Enterococcus faecalis (strain ATCC 700802 / V583) protein is L-lactate dehydrogenase 1.